The primary structure comprises 219 residues: Ribose-5-phosphate isomerase A (219 aa).

Substrate-binding positions include 28–31 (TGST), 81–84 (DGAD), and 94–97 (KGGG). The active-site Proton acceptor is Glu103. Position 121 (Lys121) interacts with substrate.

It belongs to the ribose 5-phosphate isomerase family. As to quaternary structure, homodimer.

The enzyme catalyses aldehydo-D-ribose 5-phosphate = D-ribulose 5-phosphate. It participates in carbohydrate degradation; pentose phosphate pathway; D-ribose 5-phosphate from D-ribulose 5-phosphate (non-oxidative stage): step 1/1. Its function is as follows. Catalyzes the reversible conversion of ribose-5-phosphate to ribulose 5-phosphate. The chain is Ribose-5-phosphate isomerase A from Pectobacterium carotovorum subsp. carotovorum (strain PC1).